A 126-amino-acid chain; its full sequence is Histone H2B 1.2 (126 aa).

Positions 1–12 (MPEPAKSAPAPK) are enriched in low complexity. Residues 1–35 (MPEPAKSAPAPKKGSKKAVTKTPKKDGKKRRKSRK) form a disordered region. N6-acetyllysine is present on residues Lys6 and Lys13. Phosphoserine is present on Ser15. N6-acetyllysine occurs at positions 16 and 21. O-linked (GlcNAc) serine glycosylation is present at Ser113. Lys121 participates in a covalent cross-link: Glycyl lysine isopeptide (Lys-Gly) (interchain with G-Cter in ubiquitin).

This sequence belongs to the histone H2B family. In terms of assembly, the nucleosome is a histone octamer containing two molecules each of H2A, H2B, H3 and H4 assembled in one H3-H4 heterotetramer and two H2A-H2B heterodimers. The octamer wraps approximately 147 bp of DNA. In terms of processing, monoubiquitination of Lys-121 by BRE1 gives a specific tag for epigenetic transcriptional activation and is also prerequisite for histone H3 'Lys-4' and 'Lys-79' methylation. Phosphorylated on Ser-15 during developmentally programmed apoptosis; which may facilitate apoptotic chromatin condensation. Post-translationally, glcNAcylation at Ser-113 promotes monoubiquitination of Lys-121. It fluctuates in response to extracellular glucose, and associates with transcribed genes.

The protein resides in the nucleus. Its subcellular location is the chromosome. Core component of nucleosome. Nucleosomes wrap and compact DNA into chromatin, limiting DNA accessibility to the cellular machineries which require DNA as a template. Histones thereby play a central role in transcription regulation, DNA repair, DNA replication and chromosomal stability. DNA accessibility is regulated via a complex set of post-translational modifications of histones, also called histone code, and nucleosome remodeling. In Xenopus laevis (African clawed frog), this protein is Histone H2B 1.2.